Consider the following 528-residue polypeptide: DnaJ homolog 1, mitochondrial (528 aa).

The transit peptide at methionine 1–lysine 66 directs the protein to the mitochondrion. The 65-residue stretch at aspartate 86–glycine 150 folds into the J domain. The CR-type zinc-finger motif lies at glycine 227–arginine 308. 4 CXXCXGXG motif repeats span residues cysteine 240 to glycine 247, cysteine 257 to glycine 264, cysteine 280 to glycine 287, and cysteine 296 to glycine 303. Residues asparagine 455 to serine 528 are disordered. The span at threonine 462–threonine 488 shows a compositional bias: low complexity. Over residues leucine 513–serine 528 the composition is skewed to basic and acidic residues.

It is found in the mitochondrion. In Schizosaccharomyces pombe (strain 972 / ATCC 24843) (Fission yeast), this protein is DnaJ homolog 1, mitochondrial (mdj1).